The chain runs to 249 residues: Fasciclin-like arabinogalactan protein 12 (249 aa).

The N-terminal stretch at 1 to 24 (MEHSLIILLFTVLLLLTTTPGILS) is a signal peptide. The 145-residue stretch at 37–181 (PTNVTKILEK…LAVYQVDKVL (145 aa)) folds into the FAS1 domain. 5 N-linked (GlcNAc...) asparagine glycosylation sites follow: N39, N71, N143, N152, and N159. The disordered stretch occupies residues 186 to 219 (VFDPRPPAPAPAPSVSKSKKKKDDSDSSSDDSPA). D220 carries GPI-anchor amidated aspartate lipidation. A propeptide spans 221-249 (ASFALRNVGSVCDAVSFCVMSVMLAWFYL) (removed in mature form).

The protein belongs to the fasciclin-like AGP family.

The protein resides in the cell membrane. In terms of biological role, may be a cell surface adhesion protein. This is Fasciclin-like arabinogalactan protein 12 (FLA12) from Arabidopsis thaliana (Mouse-ear cress).